The sequence spans 71 residues: Small ribosomal subunit protein eS31 (71 aa).

Residues Cys35, Cys38, Cys53, and Cys56 each coordinate Zn(2+). Residues 35 to 56 (CPKCGAGVFMAEHLNRYACGKC) form a C4-type zinc finger.

The protein belongs to the eukaryotic ribosomal protein eS31 family. In terms of assembly, part of the 30S ribosomal subunit. Requires Zn(2+) as cofactor.

The chain is Small ribosomal subunit protein eS31 from Methanococcus vannielii (strain ATCC 35089 / DSM 1224 / JCM 13029 / OCM 148 / SB).